Consider the following 956-residue polypeptide: MNLATTKAKLKSGAQAGVQALNKAGHAAKTGTVAAGKATVAGAKSLYLTIPKDYDIEKGGSLNELIKAADELGIARLQEDANNIESAKKSIDTVEKLLSFTQTGVAVSAKKLDELLQKYSSSQLAKSLGSSANIDSKLTKTNHILSTLSSFLGTALAGMDLDSLVKQGDASATDLAKASLDLINELVNNISNSVQSIEAFSEQLGRLGAAISQTKGLSGLGNKLQNLPNFGKANLALEMISGLLSGISAGFTLADKNASTEKKVAAGFELSNQVIGNVTKAISSYVLAQRAAAGLSTTGAVASLITASIMLAISPLAFMNAADKFKNASLIDEFAKQFKKFGYDGDSLLAEYQRGAGTIEASLTAINTALGAVSAGVSAAAVGSVVGSPVALLVAGVTGLISGILEASKQAMFESVANRLQSKILAWEKENGGKNYFENGYDARHAHYLERNLKLLSELNKELQAERVIAITQQRWDANIGELAGITKLGDRISSGKAYADAFEDGKKLDGASNVTVDTRTGVVDISNANGKKTQALHFTSPLLTAGTETRERVQNGKYSYINQLKFNRVKSWTVKDGEANSRLDFSKVIQHVAFNDEDGRLSGKTEEIALNVNAGSGNDDIFAGQGKMNVDGGTGHDRVFYSKDGGLGQVNVDGTKATEAGSYTVNRSINNGSFYHEVIKRQTTQVGKRTETLEYRDFELKRPEHGYQTTDTLKSVEEIVGSQFSDTFKGSKFADIFHGGDGNDTLEGNDGDDRLFGGNGDDHLYGGNGDDLLDGGKGNDVINGGDGNDVYISRKGDGNDTLYDSHGSDKLAFADADLSELTIERTAQGIMIKRNDGSGSINMAEWYKTLSQQNYHGNATDDKIEQIIGKNGDYITSEQIDKLLKDKQTGTITSAQLQQLAQENKSKSIDSGNLASTLNKLIESMASFGSRGATASNYLQPAHKSPQNVLAPSAV.

Residues 48 to 58 (LTIPKDYDIEK) are cholesterol recognition/amino acid consensus (CRAC) region 1. Cholesterol recognition/amino acid consensus (CARC) region stretches follow at residues 280 to 287 (KAISSYVL) and 340 to 348 (KFGYDGDSL). The segment at 349–354 (LAEYQR) is cholesterol recognition/amino acid consensus (CRAC) region 2. Residues 444–453 (RHAHYLERNL) form a cholesterol recognition/amino acid consensus (CARC) region 3 region. K558 carries N6-myristoyl lysine lipidation. The Hemolysin-type calcium-binding 1 repeat unit spans residues 613–639 (VNAGSGNDDIFAGQGKMNVDGGTGHDR). K689 is lipidated: N6-myristoyl lysine. Hemolysin-type calcium-binding repeat units follow at residues 722-756 (GSQF…DDRL) and 757-791 (FGGN…GNDV).

This sequence belongs to the RTX prokaryotic toxin (TC 1.C.11) family. In terms of processing, myristoylated by RtxC; the toxin only becomes active when modified. Mainly myristoylated; a very minor fraction is acylated with hydroxymyristoyl, lauroyl and palmitoleyl chains fatty acyl groups. Fatty acylation is involved in binding to host membranes and promotes the irreversible insertion of RtxA into the host cell membrane.

The protein resides in the secreted. Its subcellular location is the host cell membrane. Its function is as follows. Bacterial cytolysin that attacks host cell membranes and causes cell rupture by forming a pore. Binds and permeabilizes target cells by forming cation-selective pores. Constitutes the key virulence cytotoxin of K.kingae. Binds cholesterol and oligosaccharides on the surface of host cells. Does not bind beta-2 integrin (ITGB2) on the host cell surface. This Kingella kingae protein is Cytolysin RtxA.